Here is a 102-residue protein sequence, read N- to C-terminus: Death-associated protein 1 (102 aa).

A disordered region spans residues 1 to 102; the sequence is MSSPPEGKLE…RTQHIQQPRK (102 aa). Ser2 carries the post-translational modification N-acetylserine. Ser3 carries the post-translational modification Phosphoserine; by MTOR. Lys29 carries the post-translational modification N6-acetyllysine. A compositionally biased stretch (basic and acidic residues) spans 32–43; that stretch reads HTGDTKEEKDKD. Position 49 is a phosphoserine (Ser49). Ser51 is subject to Phosphoserine; by MTOR. Ser91 carries the post-translational modification Phosphoserine. The span at 92–102 shows a compositional bias: polar residues; it reads PRTQHIQQPRK.

It belongs to the DAP-DAPL1 family. In terms of assembly, associates with ribosomes; inhibiting translation. Interacts with eiF5a (EIF5A and EIF5A2); inhibiting translation. Phosphorylated. Phosphorylation by MTOR inhibits the suppressive activity of DAP toward autophagy.

Its function is as follows. Ribosome-binding protein involved in ribosome hibernation, a process during which ribosomes are stabilized in an inactive state and preserved from proteasomal degradation. Acts via its association with eiF5a (EIF5A and EIF5A2) at the polypeptide exit tunnel of the ribosome, preventing mRNA translation. Involved in ribosome hibernation in the mature oocyte by preventing mRNA translation, leading to ribosome inactivation. Ribosomes, which are produced in large quantities during oogenesis, are stored and translationally repressed in the oocyte and early embryo. Also acts as a negative regulator of autophagy. Involved in mediating interferon-gamma-induced cell death. The polypeptide is Death-associated protein 1 (Homo sapiens (Human)).